The following is a 510-amino-acid chain: Arginine biosynthesis bifunctional protein ArgJ, chloroplastic (510 aa).

Residues threonine 223, lysine 249, glutamate 359, asparagine 505, and threonine 510 each contribute to the substrate site.

The protein belongs to the ArgJ family. Heterodimer of an alpha and a beta chain.

It is found in the plastid. The protein localises to the chloroplast. It carries out the reaction N(2)-acetyl-L-ornithine + L-glutamate = N-acetyl-L-glutamate + L-ornithine. It catalyses the reaction L-glutamate + acetyl-CoA = N-acetyl-L-glutamate + CoA + H(+). Its pathway is amino-acid biosynthesis; L-arginine biosynthesis; L-ornithine and N-acetyl-L-glutamate from L-glutamate and N(2)-acetyl-L-ornithine (cyclic): step 1/1. It functions in the pathway amino-acid biosynthesis; L-arginine biosynthesis; N(2)-acetyl-L-ornithine from L-glutamate: step 1/4. Functionally, catalyzes two activities which are involved in the cyclic version of arginine biosynthesis: the synthesis of acetylglutamate from glutamate and acetyl-CoA, and of ornithine by transacetylation between acetylornithine and glutamate. The protein is Arginine biosynthesis bifunctional protein ArgJ, chloroplastic of Vitis vinifera (Grape).